The primary structure comprises 409 residues: Elongation factor Tu, plastid (409 aa).

Residues 10–214 (KPHINIGTIG…KIDSYIPTPI (205 aa)) form the tr-type G domain. A G1 region spans residues 19–26 (GHVDHGKT). Residue 19 to 26 (GHVDHGKT) coordinates GTP. Thr-26 is a Mg(2+) binding site. A G2 region spans residues 60–64 (GITIN). The G3 stretch occupies residues 81–84 (DCPG). GTP-binding positions include 81–85 (DCPGH) and 136–139 (NKED). The tract at residues 136–139 (NKED) is G4. The segment at 174–176 (SAL) is G5.

Belongs to the TRAFAC class translation factor GTPase superfamily. Classic translation factor GTPase family. EF-Tu/EF-1A subfamily.

It is found in the plastid. The enzyme catalyses GTP + H2O = GDP + phosphate + H(+). GTP hydrolase that promotes the GTP-dependent binding of aminoacyl-tRNA to the A-site of ribosomes during protein biosynthesis. The polypeptide is Elongation factor Tu, plastid (tufA) (Euglena longa (Euglenophycean alga)).